Reading from the N-terminus, the 468-residue chain is UDP-N-acetylmuramate--L-alanine ligase (468 aa).

An ATP-binding site is contributed by 107-113 (GTHGKTT).

Belongs to the MurCDEF family.

The protein localises to the cytoplasm. The enzyme catalyses UDP-N-acetyl-alpha-D-muramate + L-alanine + ATP = UDP-N-acetyl-alpha-D-muramoyl-L-alanine + ADP + phosphate + H(+). It functions in the pathway cell wall biogenesis; peptidoglycan biosynthesis. In terms of biological role, cell wall formation. This chain is UDP-N-acetylmuramate--L-alanine ligase, found in Roseiflexus sp. (strain RS-1).